Here is a 289-residue protein sequence, read N- to C-terminus: Enoyl-CoA delta isomerase 1, mitochondrial (289 aa).

The transit peptide at 1 to 28 directs the protein to the mitochondrion; sequence MALAAARRVLLQAGSRLGRRGAVDGARR. Lysine 48 is modified (N6-acetyllysine; alternate). Lysine 48 carries the N6-succinyllysine; alternate modification. Lysine 71 carries the N6-succinyllysine modification. Residue lysine 76 is modified to N6-acetyllysine. Residues 93-97, glycine 140, and asparagine 164 contribute to the substrate site; that span reads AGLDL. N6-acetyllysine; alternate occurs at positions 222, 229, and 255. Lysine 222, lysine 229, and lysine 255 each carry N6-succinyllysine; alternate. Position 275 is an N6-succinyllysine (lysine 275). Lysine 283 is subject to N6-acetyllysine; alternate. The residue at position 283 (lysine 283) is an N6-succinyllysine; alternate.

It belongs to the enoyl-CoA hydratase/isomerase family. Homotrimer.

The protein localises to the mitochondrion matrix. It catalyses the reaction a (3Z)-enoyl-CoA = a 4-saturated (2E)-enoyl-CoA. The enzyme catalyses a (3E)-enoyl-CoA = a 4-saturated (2E)-enoyl-CoA. The catalysed reaction is (3Z)-octenoyl-CoA = (2E)-octenoyl-CoA. It carries out the reaction (2E)-tetradecenoyl-CoA = (3Z)-tetradecenoyl-CoA. It catalyses the reaction (3Z)-dodecenoyl-CoA = (2E)-dodecenoyl-CoA. The enzyme catalyses (3Z)-hexenoyl-CoA = (2E)-hexenoyl-CoA. The catalysed reaction is (3Z)-decenoyl-CoA = (2E)-decenoyl-CoA. Its pathway is lipid metabolism; fatty acid beta-oxidation. In terms of biological role, key enzyme of fatty acid beta-oxidation. Able to isomerize both 3-cis (3Z) and 3-trans (3E) double bonds into the 2-trans (2E) form in a range of enoyl-CoA species, with a preference for (3Z)-enoyl-CoAs over (3E)-enoyl-CoAs. The catalytic efficiency of this enzyme is not affected by the fatty acyl chain length. This chain is Enoyl-CoA delta isomerase 1, mitochondrial, found in Rattus norvegicus (Rat).